The primary structure comprises 160 residues: Small ribosomal subunit protein bS16 (160 aa).

The tract at residues 115–139 (GGPTTEATRPKKKVSAKKAAKAVES) is disordered. The segment covering 124-134 (PKKKVSAKKAA) has biased composition (basic residues).

This sequence belongs to the bacterial ribosomal protein bS16 family.

The sequence is that of Small ribosomal subunit protein bS16 from Mycobacterium leprae (strain Br4923).